Here is a 427-residue protein sequence, read N- to C-terminus: MAIILKNGKSFNKDGVIERTELKIENGFITAIGSKLHSEEADEVIDVQGKLISAGFIDLHVHLREPGGEAKETIATGTLAAAKGGFTTVAAMPNTRPVPDTKEQMEWLCKRIRETAYVHVLPYAAITVGQQGTELTDFAALKEAGAFAFTDDGVGVQSAGMMYEAMKRAAALDMAIVAHCEDNTLANRGVVHDGEFAHRYGLYGIPSVCESVHIARDVLLAEATGCHYHVCHISTKESVRVVRDAKRAGIRVTAEVTPHHLLLCDEDIPGPDANYKMNPPLRSKEDREALIEGLLDGTIDFIATDHAPHTEAEKQKGINAAPFGIVGLETAFPLLYTHLVETNILTLKQLIDLLTVKPAECFGLPLGKLAVGERADITIIDLETEEAIDPQTFVSRGKNTPFAGWKCKGWPVMTFVGGKLVWQKGRE.

His-60 and His-62 together coordinate Zn(2+). Substrate-binding positions include 62 to 64 (HLR) and Asn-94. Positions 152, 179, and 232 each coordinate Zn(2+). Asn-278 is a substrate binding site. A Zn(2+)-binding site is contributed by Asp-305. Residue Asp-305 is part of the active site. Substrate-binding positions include His-309 and 323–324 (FG).

The protein belongs to the metallo-dependent hydrolases superfamily. DHOase family. Class I DHOase subfamily. The cofactor is Zn(2+).

The enzyme catalyses (S)-dihydroorotate + H2O = N-carbamoyl-L-aspartate + H(+). It functions in the pathway pyrimidine metabolism; UMP biosynthesis via de novo pathway; (S)-dihydroorotate from bicarbonate: step 3/3. Catalyzes the reversible cyclization of carbamoyl aspartate to dihydroorotate. The protein is Dihydroorotase of Geobacillus sp. (strain WCH70).